A 458-amino-acid polypeptide reads, in one-letter code: Exodeoxyribonuclease 7 large subunit (458 aa).

This sequence belongs to the XseA family. As to quaternary structure, heterooligomer composed of large and small subunits.

It is found in the cytoplasm. The enzyme catalyses Exonucleolytic cleavage in either 5'- to 3'- or 3'- to 5'-direction to yield nucleoside 5'-phosphates.. Functionally, bidirectionally degrades single-stranded DNA into large acid-insoluble oligonucleotides, which are then degraded further into small acid-soluble oligonucleotides. The protein is Exodeoxyribonuclease 7 large subunit of Escherichia coli (strain UTI89 / UPEC).